The following is a 215-amino-acid chain: Large ribosomal subunit protein uL4 (215 aa).

The segment at 46-76 (TAKSKNRAEVSGGGRKPWAQKGGGRARAGSI) is disordered. Positions 56–71 (SGGGRKPWAQKGGGRA) are enriched in gly residues.

This sequence belongs to the universal ribosomal protein uL4 family. Part of the 50S ribosomal subunit.

Its function is as follows. One of the primary rRNA binding proteins, this protein initially binds near the 5'-end of the 23S rRNA. It is important during the early stages of 50S assembly. It makes multiple contacts with different domains of the 23S rRNA in the assembled 50S subunit and ribosome. In terms of biological role, forms part of the polypeptide exit tunnel. The protein is Large ribosomal subunit protein uL4 of Helicobacter pylori (strain HPAG1).